Reading from the N-terminus, the 344-residue chain is S-adenosylmethionine:tRNA ribosyltransferase-isomerase (344 aa).

This sequence belongs to the QueA family. As to quaternary structure, monomer.

It localises to the cytoplasm. The catalysed reaction is 7-aminomethyl-7-carbaguanosine(34) in tRNA + S-adenosyl-L-methionine = epoxyqueuosine(34) in tRNA + adenine + L-methionine + 2 H(+). The protein operates within tRNA modification; tRNA-queuosine biosynthesis. In terms of biological role, transfers and isomerizes the ribose moiety from AdoMet to the 7-aminomethyl group of 7-deazaguanine (preQ1-tRNA) to give epoxyqueuosine (oQ-tRNA). In Thiobacillus denitrificans (strain ATCC 25259 / T1), this protein is S-adenosylmethionine:tRNA ribosyltransferase-isomerase.